The chain runs to 88 residues: Probable Fe(2+)-trafficking protein (88 aa).

It belongs to the Fe(2+)-trafficking protein family.

Its function is as follows. Could be a mediator in iron transactions between iron acquisition and iron-requiring processes, such as synthesis and/or repair of Fe-S clusters in biosynthetic enzymes. This chain is Probable Fe(2+)-trafficking protein, found in Teredinibacter turnerae (strain ATCC 39867 / T7901).